The following is a 103-amino-acid chain: Histone H4.1 (103 aa).

A compositionally biased stretch (gly residues) spans 1–14 (MSGRGKGGKGLGKG). The segment at 1 to 20 (MSGRGKGGKGLGKGGAKRHR) is disordered. The residue at position 6 (Lys6) is an N6-acetyl-N6-methyllysine; alternate. 3 positions are modified to N6-methyllysine; alternate: Lys6, Lys9, and Lys13. Lys13 bears the N6-acetyl-N6-methyllysine; alternate mark. The DNA-binding element occupies 17 to 21 (KRHRK). An N6-glutaryllysine modification is found at Lys92.

It belongs to the histone H4 family. In terms of assembly, the nucleosome is a histone octamer containing two molecules each of H2A, H2B, H3 and H4 assembled in one H3-H4 heterotetramer and two H2A-H2B heterodimers. The octamer wraps approximately 147 bp of DNA. Glutarylation at Lys-92 (H4K91glu) destabilizes nucleosomes by promoting dissociation of the H2A-H2B dimers from nucleosomes.

The protein resides in the nucleus. The protein localises to the chromosome. Its function is as follows. Core component of nucleosome. Nucleosomes wrap and compact DNA into chromatin, limiting DNA accessibility to the cellular machineries which require DNA as a template. Histones thereby play a central role in transcription regulation, DNA repair, DNA replication and chromosomal stability. DNA accessibility is regulated via a complex set of post-translational modifications of histones, also called histone code, and nucleosome remodeling. The protein is Histone H4.1 (hhfA) of Emericella nidulans (strain FGSC A4 / ATCC 38163 / CBS 112.46 / NRRL 194 / M139) (Aspergillus nidulans).